The sequence spans 472 residues: Adenosylhomocysteinase (472 aa).

Residues threonine 61, aspartate 136, and glutamate 196 each contribute to the substrate site. Position 197 to 199 (197 to 199 (TTT)) interacts with NAD(+). Substrate contacts are provided by lysine 226 and aspartate 230. NAD(+) contacts are provided by residues asparagine 231, 260–265 (GYGDVG), glutamate 283, asparagine 318, 339–341 (IGH), and asparagine 384.

It belongs to the adenosylhomocysteinase family. Requires NAD(+) as cofactor.

The protein resides in the cytoplasm. The enzyme catalyses S-adenosyl-L-homocysteine + H2O = L-homocysteine + adenosine. It participates in amino-acid biosynthesis; L-homocysteine biosynthesis; L-homocysteine from S-adenosyl-L-homocysteine: step 1/1. Its function is as follows. May play a key role in the regulation of the intracellular concentration of adenosylhomocysteine. This is Adenosylhomocysteinase from Cupriavidus metallidurans (strain ATCC 43123 / DSM 2839 / NBRC 102507 / CH34) (Ralstonia metallidurans).